We begin with the raw amino-acid sequence, 269 residues long: MRIALGIEYDGSRYFGWQRQREVISVQAELEKALSRIANHPVSIQCAGRTDAGVHATGQVIHFDTHAIRSESAWTLGLNSNLPPDIAVRWVKEVDETFHARFSATARRYRYVIYNHNYRPAILGSGVSHYHETIDAALMHLAGQCLLGEQDFTSFRAIGCQSKTPWRNVTHLCVSRQGPYIVLDIRANAFLHHMVRNITGSLLLVGQGLKPVEWIAELLAAKDRNQAGPTAKAGGLYLVDVDYPAELALPQLPLGPLWLPDSAPGTTSF.

Aspartate 51 (nucleophile) is an active-site residue. Residue tyrosine 109 participates in substrate binding.

It belongs to the tRNA pseudouridine synthase TruA family. Homodimer.

It catalyses the reaction uridine(38/39/40) in tRNA = pseudouridine(38/39/40) in tRNA. Formation of pseudouridine at positions 38, 39 and 40 in the anticodon stem and loop of transfer RNAs. The polypeptide is tRNA pseudouridine synthase A (Aeromonas salmonicida (strain A449)).